Reading from the N-terminus, the 635-residue chain is Cytoplasmic polyadenylation element-binding protein 4 (635 aa).

3 disordered regions span residues 1–70, 149–284, and 337–369; these read MQDD…TLRL, GFGG…GFNT, and LFPMEDERSYGEDERSDQSLSGLGSPHSFPHQN. Polar residues predominate over residues 14 to 30; the sequence is PQLQQESQEGQDKQTLS. Over residues 166–182 the composition is skewed to basic residues; sequence PSPHPHFQHPHNQHRRS. Positions 216 to 231 are enriched in low complexity; it reads GSYQSPSSTPSSTSWS. Positions 232 to 241 are enriched in gly residues; the sequence is PGGGYGGWGS. Over residues 254–283 the composition is skewed to polar residues; that stretch reads PLNSISPLKKSFPNNQTQTQKYPRNNSGFN. The segment covering 341 to 353 has biased composition (basic and acidic residues); that stretch reads EDERSYGEDERSD. 2 RRM domains span residues 378–469 and 486–568; these read RKVF…PWNL and KTIF…PYVL.

Belongs to the RRM CPEB family.

It localises to the cytoplasm. The protein resides in the cell projection. Its subcellular location is the dendrite. The protein localises to the dendritic spine. It is found in the postsynaptic density. It localises to the axon. The protein resides in the growth cone. Its subcellular location is the endoplasmic reticulum. The protein localises to the perinuclear region. In terms of biological role, sequence-specific RNA-binding protein that binds to the cytoplasmic polyadenylation element (CPE), an uridine-rich sequence element (consensus sequence 5'-UUUUUAU-3') within the mRNA 3'-UTR. RNA binding results in a clear conformational change analogous to the Venus fly trap mechanism. The polypeptide is Cytoplasmic polyadenylation element-binding protein 4 (cpeb4) (Danio rerio (Zebrafish)).